A 170-amino-acid chain; its full sequence is Lipoprotein signal peptidase (170 aa).

A run of 3 helical transmembrane segments spans residues 12-32 (WYWV…WVLS), 67-87 (WQRW…SVWL), and 94-113 (MWRL…GNLI). Residues D123 and D141 contribute to the active site. Residues 139-159 (IADSAICVGAGLIILDSFVAG) traverse the membrane as a helical segment.

It belongs to the peptidase A8 family.

Its subcellular location is the cell inner membrane. It catalyses the reaction Release of signal peptides from bacterial membrane prolipoproteins. Hydrolyzes -Xaa-Yaa-Zaa-|-(S,diacylglyceryl)Cys-, in which Xaa is hydrophobic (preferably Leu), and Yaa (Ala or Ser) and Zaa (Gly or Ala) have small, neutral side chains.. The protein operates within protein modification; lipoprotein biosynthesis (signal peptide cleavage). Its function is as follows. This protein specifically catalyzes the removal of signal peptides from prolipoproteins. The chain is Lipoprotein signal peptidase from Shewanella pealeana (strain ATCC 700345 / ANG-SQ1).